An 83-amino-acid chain; its full sequence is Pigment-dispersing hormone peptides (83 aa).

An N-terminal signal peptide occupies residues 1–24; the sequence is MRFIILGVLFIAVASMILSNGVMA. A80 bears the Alanine amide mark.

This sequence belongs to the arthropod PDH family. In terms of tissue distribution, strongly expressed in eyestalk tissue and cerebral ganglia (at protein level).

Its subcellular location is the secreted. Functionally, the pigment-dispersing hormone causes the migration of the distal retinal pigment into the proximal end of the pigment chromatophore cells and thus decreases the amount of light entering the retinulas. May also function as a neurotransmitter and/or neuromodulator. The polypeptide is Pigment-dispersing hormone peptides (Eurydice pulchra (Speckled sea louse)).